We begin with the raw amino-acid sequence, 473 residues long: Putative F-box/LRR-repeat protein At3g59170 (473 aa).

An F-box domain is found at 6–54; that stretch reads KDMINVLPDALLCHILSFLTTKEAASTSLLSRRWRYLLAFVPNLEFDDS. LRR repeat units lie at residues 168–194, 196–221, 229–254, 333–364, and 365–390; these read TIKI…YLQS, MFDE…VLDG, SFTV…GYMH, VLYL…TIKS, and DPNV…VFQG.

In Arabidopsis thaliana (Mouse-ear cress), this protein is Putative F-box/LRR-repeat protein At3g59170.